A 160-amino-acid chain; its full sequence is Lipoprotein signal peptidase (160 aa).

A run of 3 helical transmembrane segments spans residues I13 to I33, W72 to L92, and S104 to V124. Residues D125 and D143 contribute to the active site. A helical membrane pass occupies residues W134–M154.

The protein belongs to the peptidase A8 family.

The protein resides in the cell inner membrane. It catalyses the reaction Release of signal peptides from bacterial membrane prolipoproteins. Hydrolyzes -Xaa-Yaa-Zaa-|-(S,diacylglyceryl)Cys-, in which Xaa is hydrophobic (preferably Leu), and Yaa (Ala or Ser) and Zaa (Gly or Ala) have small, neutral side chains.. It functions in the pathway protein modification; lipoprotein biosynthesis (signal peptide cleavage). In terms of biological role, this protein specifically catalyzes the removal of signal peptides from prolipoproteins. The protein is Lipoprotein signal peptidase of Buchnera aphidicola subsp. Acyrthosiphon pisum (strain 5A).